We begin with the raw amino-acid sequence, 294 residues long: 33 kDa chaperonin (294 aa).

Intrachain disulfides connect C239/C241 and C272/C275.

This sequence belongs to the HSP33 family. Under oxidizing conditions two disulfide bonds are formed involving the reactive cysteines. Under reducing conditions zinc is bound to the reactive cysteines and the protein is inactive.

It localises to the cytoplasm. In terms of biological role, redox regulated molecular chaperone. Protects both thermally unfolding and oxidatively damaged proteins from irreversible aggregation. Plays an important role in the bacterial defense system toward oxidative stress. The chain is 33 kDa chaperonin from Listeria monocytogenes serovar 1/2a (strain ATCC BAA-679 / EGD-e).